The chain runs to 227 residues: Orotate phosphoribosyltransferase (227 aa).

Positions 51, 119, 120, and 123 each coordinate 5-phospho-alpha-D-ribose 1-diphosphate. Residues Thr-149 and Arg-177 each coordinate orotate.

It belongs to the purine/pyrimidine phosphoribosyltransferase family. PyrE subfamily. As to quaternary structure, homodimer. In terms of tissue distribution, expressed in body wall muscles, spermatheca and vulva muscles.

It carries out the reaction orotidine 5'-phosphate + diphosphate = orotate + 5-phospho-alpha-D-ribose 1-diphosphate. It catalyses the reaction UMP + diphosphate = 5-phospho-alpha-D-ribose 1-diphosphate + uracil. Its pathway is pyrimidine metabolism; UMP biosynthesis via de novo pathway; UMP from orotate: step 1/2. The protein operates within pyrimidine metabolism; UMP biosynthesis via salvage pathway; UMP from uracil: step 1/1. Its function is as follows. Phosphoribosyltransferase which catalyzes the formation of UMP from uracil in vitro and thus may be involved in UMP biosynthesis via the salvage pathway. May also participate in the first step of UMP synthesis by catalyzing the formation of orotidine 5'-phosphate, a UMP precursor, from orotate. This chain is Orotate phosphoribosyltransferase, found in Caenorhabditis elegans.